A 1434-amino-acid polypeptide reads, in one-letter code: Gag-Pol polyprotein (1434 aa).

Gly-2 is lipidated: N-myristoyl glycine; by host. Residues 7–31 (VLSGGKLDAWEKIRLRPGGKKKYRL) form an interaction with Gp41 region. The interval 8-43 (LSGGKLDAWEKIRLRPGGKKKYRLKHIVWASRELKR) is interaction with host CALM1. The interval 12 to 19 (KLDAWEKI) is interaction with host AP3D1. The interaction with membrane phosphatidylinositol 4,5-bisphosphate and RNA stretch occupies residues 14–33 (DAWEKIRLRPGGKKKYRLKH). Residues 16–22 (WEKIRLR) carry the Nuclear export signal motif. The Nuclear localization signal signature appears at 26 to 32 (KKKYRLK). The interval 73–77 (EELKS) is interaction with membrane phosphatidylinositol 4,5-bisphosphate. Positions 103–112 (KLQEEQDKHQ) are enriched in basic and acidic residues. Positions 103–124 (KLQEEQDKHQQKTQQATADKGV) are disordered. At Tyr-132 the chain carries Phosphotyrosine; by host. Residues 189–227 (NTVGGHQAAMQMLKDTINEEAAEWDRLHPVHAGPIPPGQ) are interaction with human PPIA/CYPA and NUP153. The dimerization/Multimerization of capsid protein p24 stretch occupies residues 277 to 363 (YSPVSILDIK…GGPSHKARIL (87 aa)). 2 CCHC-type zinc fingers span residues 389-406 (VKCFNCGKEGHIARNCRA) and 410-427 (RGCWKCGQEGHQMKDCTE). Positions 443–483 (EARKFSSEQTRANSPASRELRVRGGDSSLPEAGAERQGTGS) are disordered. Polar residues predominate over residues 449–458 (SEQTRANSPA). The tract at residues 488 to 492 (PQITL) is dimerization of protease. One can recognise a Peptidase A2 domain in the interval 507 to 576 (REALLDTGAD…TPVNIIGRNM (70 aa)). Asp-512 serves as the catalytic For protease activity; shared with dimeric partner. Dimerization of protease regions lie at residues 536 to 542 (GIGGFIK) and 575 to 587 (NMLTQIGCTLNFP). One can recognise a Reverse transcriptase domain in the interval 630 to 820 (EGKISKIGPE…PPFLWMGYEL (191 aa)). Mg(2+) is bound by residues Asp-696, Asp-771, and Asp-772. An RT 'primer grip' region spans residues 813-821 (FLWMGYELH). Positions 984–1000 (WEIWWTEYWQATWIPEW) match the Tryptophan repeat motif motif. Residues 1020 to 1143 (IIGAETFYVD…VDKLVSTGIR (124 aa)) form the RNase H type-1 domain. 4 residues coordinate Mg(2+): Asp-1029, Glu-1064, Asp-1084, and Asp-1135. Residues 1149–1190 (DGIDKAQEEHEKYHSNWRAMASDFNLPPVVAKEIVASCDKCQ) form an Integrase-type zinc finger. Residues His-1158, His-1162, Cys-1186, and Cys-1189 each contribute to the Zn(2+) site. Residues 1200–1350 (VDCSPGIWQL…SAGERIIDII (151 aa)) enclose the Integrase catalytic domain. Positions 1210, 1262, and 1298 each coordinate Mg(2+). A DNA-binding region (integrase-type) is located at residues 1369–1416 (FRVYFRDSRDPVWKGPAKLLWKGEGAVVIQDNNEIKVIPRRKAKIIRD).

Homotrimer; further assembles as hexamers of trimers. Interacts with gp41 (via C-terminus). Interacts with host CALM1; this interaction induces a conformational change in the Matrix protein, triggering exposure of the myristate group. Interacts with host AP3D1; this interaction allows the polyprotein trafficking to multivesicular bodies during virus assembly. Part of the pre-integration complex (PIC) which is composed of viral genome, matrix protein, Vpr and integrase. In terms of assembly, homodimer; the homodimer further multimerizes as homohexamers or homopentamers. Interacts with human PPIA/CYPA; This interaction stabilizes the capsid. Interacts with human NUP153. Interacts with host PDZD8; this interaction stabilizes the capsid. Interacts with monkey TRIM5; this interaction destabilizes the capsid. As to quaternary structure, homodimer, whose active site consists of two apposed aspartic acid residues. Heterodimer of p66 RT and p51 RT (RT p66/p51). Heterodimerization of RT is essential for DNA polymerase activity. The overall folding of the subdomains is similar in p66 RT and p51 RT but the spatial arrangements of the subdomains are dramatically different. In terms of assembly, homotetramer; may further associate as a homohexadecamer. Part of the pre-integration complex (PIC) which is composed of viral genome, matrix protein, Vpr and integrase. Interacts with human SMARCB1/INI1 and human PSIP1/LEDGF isoform 1. Interacts with human KPNA3; this interaction might play a role in nuclear import of the pre-integration complex. Interacts with human NUP153; this interaction might play a role in nuclear import of the pre-integration complex. Mg(2+) is required as a cofactor. Post-translationally, specific enzymatic cleavages by the viral protease yield mature proteins. The protease is released by autocatalytic cleavage. The polyprotein is cleaved during and after budding, this process is termed maturation. Proteolytic cleavage of p66 RT removes the RNase H domain to yield the p51 RT subunit. Nucleocapsid protein p7 might be further cleaved after virus entry. Tyrosine phosphorylated presumably in the virion by a host kinase. Phosphorylation is apparently not a major regulator of membrane association. In terms of processing, phosphorylated possibly by host MAPK1; this phosphorylation is necessary for Pin1-mediated virion uncoating. Post-translationally, methylated by host PRMT6, impairing its function by reducing RNA annealing and the initiation of reverse transcription.

Its subcellular location is the host cell membrane. It is found in the host endosome. The protein localises to the host multivesicular body. The protein resides in the virion membrane. It localises to the host nucleus. Its subcellular location is the host cytoplasm. It is found in the virion. It catalyses the reaction Specific for a P1 residue that is hydrophobic, and P1' variable, but often Pro.. The enzyme catalyses Endohydrolysis of RNA in RNA/DNA hybrids. Three different cleavage modes: 1. sequence-specific internal cleavage of RNA. Human immunodeficiency virus type 1 and Moloney murine leukemia virus enzymes prefer to cleave the RNA strand one nucleotide away from the RNA-DNA junction. 2. RNA 5'-end directed cleavage 13-19 nucleotides from the RNA end. 3. DNA 3'-end directed cleavage 15-20 nucleotides away from the primer terminus.. It carries out the reaction 3'-end directed exonucleolytic cleavage of viral RNA-DNA hybrid.. The catalysed reaction is DNA(n) + a 2'-deoxyribonucleoside 5'-triphosphate = DNA(n+1) + diphosphate. With respect to regulation, protease: The viral protease is inhibited by many synthetic protease inhibitors (PIs), such as amprenavir, atazanavir, indinavir, loprinavir, nelfinavir, ritonavir and saquinavir. Use of protease inhibitors in tritherapy regimens permit more ambitious therapeutic strategies. Reverse transcriptase/ribonuclease H: RT can be inhibited either by nucleoside RT inhibitors (NRTIs) or by non nucleoside RT inhibitors (NNRTIs). NRTIs act as chain terminators, whereas NNRTIs inhibit DNA polymerization by binding a small hydrophobic pocket near the RT active site and inducing an allosteric change in this region. Classical NRTIs are abacavir, adefovir (PMEA), didanosine (ddI), lamivudine (3TC), stavudine (d4T), tenofovir (PMPA), zalcitabine (ddC), and zidovudine (AZT). Classical NNRTIs are atevirdine (BHAP U-87201E), delavirdine, efavirenz (DMP-266), emivirine (I-EBU), and nevirapine (BI-RG-587). The tritherapies used as a basic effective treatment of AIDS associate two NRTIs and one NNRTI. Its function is as follows. Mediates, with Gag polyprotein, the essential events in virion assembly, including binding the plasma membrane, making the protein-protein interactions necessary to create spherical particles, recruiting the viral Env proteins, and packaging the genomic RNA via direct interactions with the RNA packaging sequence (Psi). Gag-Pol polyprotein may regulate its own translation, by the binding genomic RNA in the 5'-UTR. At low concentration, the polyprotein would promote translation, whereas at high concentration, the polyprotein would encapsidate genomic RNA and then shut off translation. Functionally, targets the polyprotein to the plasma membrane via a multipartite membrane-binding signal, that includes its myristoylated N-terminus. Matrix protein is part of the pre-integration complex. Implicated in the release from host cell mediated by Vpu. Binds to RNA. Forms the conical core that encapsulates the genomic RNA-nucleocapsid complex in the virion. Most core are conical, with only 7% tubular. The core is constituted by capsid protein hexamer subunits. The core is disassembled soon after virion entry. Host restriction factors such as TRIM5-alpha or TRIMCyp bind retroviral capsids and cause premature capsid disassembly, leading to blocks in reverse transcription. Capsid restriction by TRIM5 is one of the factors which restricts HIV-1 to the human species. Host PIN1 apparently facilitates the virion uncoating. On the other hand, interactions with PDZD8 or CYPA stabilize the capsid. In terms of biological role, encapsulates and protects viral dimeric unspliced genomic RNA (gRNA). Binds these RNAs through its zinc fingers. Acts as a nucleic acid chaperone which is involved in rearangement of nucleic acid secondary structure during gRNA retrotranscription. Also facilitates template switch leading to recombination. As part of the polyprotein, participates in gRNA dimerization, packaging, tRNA incorporation and virion assembly. Its function is as follows. Aspartyl protease that mediates proteolytic cleavages of Gag and Gag-Pol polyproteins during or shortly after the release of the virion from the plasma membrane. Cleavages take place as an ordered, step-wise cascade to yield mature proteins. This process is called maturation. Displays maximal activity during the budding process just prior to particle release from the cell. Also cleaves Nef and Vif, probably concomitantly with viral structural proteins on maturation of virus particles. Hydrolyzes host EIF4GI and PABP1 in order to shut off the capped cellular mRNA translation. The resulting inhibition of cellular protein synthesis serves to ensure maximal viral gene expression and to evade host immune response. Also mediates cleavage of host YTHDF3. Mediates cleavage of host CARD8, thereby activating the CARD8 inflammasome, leading to the clearance of latent HIV-1 in patient CD4(+) T-cells after viral reactivation; in contrast, HIV-1 can evade CARD8-sensing when its protease remains inactive in infected cells prior to viral budding. Functionally, multifunctional enzyme that converts the viral RNA genome into dsDNA in the cytoplasm, shortly after virus entry into the cell. This enzyme displays a DNA polymerase activity that can copy either DNA or RNA templates, and a ribonuclease H (RNase H) activity that cleaves the RNA strand of RNA-DNA heteroduplexes in a partially processive 3' to 5' endonucleasic mode. Conversion of viral genomic RNA into dsDNA requires many steps. A tRNA(3)-Lys binds to the primer-binding site (PBS) situated at the 5'-end of the viral RNA. RT uses the 3' end of the tRNA primer to perform a short round of RNA-dependent minus-strand DNA synthesis. The reading proceeds through the U5 region and ends after the repeated (R) region which is present at both ends of viral RNA. The portion of the RNA-DNA heteroduplex is digested by the RNase H, resulting in a ssDNA product attached to the tRNA primer. This ssDNA/tRNA hybridizes with the identical R region situated at the 3' end of viral RNA. This template exchange, known as minus-strand DNA strong stop transfer, can be either intra- or intermolecular. RT uses the 3' end of this newly synthesized short ssDNA to perform the RNA-dependent minus-strand DNA synthesis of the whole template. RNase H digests the RNA template except for two polypurine tracts (PPTs) situated at the 5'-end and near the center of the genome. It is not clear if both polymerase and RNase H activities are simultaneous. RNase H probably can proceed both in a polymerase-dependent (RNA cut into small fragments by the same RT performing DNA synthesis) and a polymerase-independent mode (cleavage of remaining RNA fragments by free RTs). Secondly, RT performs DNA-directed plus-strand DNA synthesis using the PPTs that have not been removed by RNase H as primers. PPTs and tRNA primers are then removed by RNase H. The 3' and 5' ssDNA PBS regions hybridize to form a circular dsDNA intermediate. Strand displacement synthesis by RT to the PBS and PPT ends produces a blunt ended, linear dsDNA copy of the viral genome that includes long terminal repeats (LTRs) at both ends. Catalyzes viral DNA integration into the host chromosome, by performing a series of DNA cutting and joining reactions. This enzyme activity takes place after virion entry into a cell and reverse transcription of the RNA genome in dsDNA. The first step in the integration process is 3' processing. This step requires a complex comprising the viral genome, matrix protein, Vpr and integrase. This complex is called the pre-integration complex (PIC). The integrase protein removes 2 nucleotides from each 3' end of the viral DNA, leaving recessed CA OH's at the 3' ends. In the second step, the PIC enters cell nucleus. This process is mediated through integrase and Vpr proteins, and allows the virus to infect a non dividing cell. This ability to enter the nucleus is specific of lentiviruses, other retroviruses cannot and rely on cell division to access cell chromosomes. In the third step, termed strand transfer, the integrase protein joins the previously processed 3' ends to the 5' ends of strands of target cellular DNA at the site of integration. The 5'-ends are produced by integrase-catalyzed staggered cuts, 5 bp apart. A Y-shaped, gapped, recombination intermediate results, with the 5'-ends of the viral DNA strands and the 3' ends of target DNA strands remaining unjoined, flanking a gap of 5 bp. The last step is viral DNA integration into host chromosome. This involves host DNA repair synthesis in which the 5 bp gaps between the unjoined strands are filled in and then ligated. Since this process occurs at both cuts flanking the HIV genome, a 5 bp duplication of host DNA is produced at the ends of HIV-1 integration. Alternatively, Integrase may catalyze the excision of viral DNA just after strand transfer, this is termed disintegration. This is Gag-Pol polyprotein (gag-pol) from Homo sapiens (Human).